Here is a 142-residue protein sequence, read N- to C-terminus: Metallothiol transferase FosB (142 aa).

In terms of domain architecture, VOC spans 5-120 (SVNHICFSVS…DGHKIELHTG (116 aa)). Positions 8, 67, and 116 each coordinate Mg(2+). The active-site Proton donor/acceptor is the Glu-116.

The protein belongs to the fosfomycin resistance protein family. FosB subfamily. Homodimer. Mg(2+) is required as a cofactor.

It is found in the cytoplasm. Metallothiol transferase which confers resistance to fosfomycin by catalyzing the addition of a thiol cofactor to fosfomycin. L-cysteine is probably the physiological thiol donor. This Staphylococcus epidermidis (strain ATCC 12228 / FDA PCI 1200) protein is Metallothiol transferase FosB.